Reading from the N-terminus, the 394-residue chain is ATP phosphoribosyltransferase regulatory subunit (394 aa).

The protein belongs to the class-II aminoacyl-tRNA synthetase family. HisZ subfamily. Heteromultimer composed of HisG and HisZ subunits.

It is found in the cytoplasm. The protein operates within amino-acid biosynthesis; L-histidine biosynthesis; L-histidine from 5-phospho-alpha-D-ribose 1-diphosphate: step 1/9. In terms of biological role, required for the first step of histidine biosynthesis. May allow the feedback regulation of ATP phosphoribosyltransferase activity by histidine. The polypeptide is ATP phosphoribosyltransferase regulatory subunit (Teredinibacter turnerae (strain ATCC 39867 / T7901)).